A 937-amino-acid chain; its full sequence is Putative diacylglycerol kinase K06A1.6 (937 aa).

Disordered stretches follow at residues proline 44–alanine 69 and serine 106–asparagine 145. Low complexity predominate over residues valine 116–aspartate 129. One can recognise a DAGKc domain in the interval glycine 414–proline 551.

This sequence belongs to the eukaryotic diacylglycerol kinase family.

It carries out the reaction a 1,2-diacyl-sn-glycerol + ATP = a 1,2-diacyl-sn-glycero-3-phosphate + ADP + H(+). The sequence is that of Putative diacylglycerol kinase K06A1.6 (dgk-5) from Caenorhabditis elegans.